Consider the following 338-residue polypeptide: Nicotinate-nucleotide--dimethylbenzimidazole phosphoribosyltransferase (338 aa).

Glu305 serves as the catalytic Proton acceptor.

The protein belongs to the CobT family.

It catalyses the reaction 5,6-dimethylbenzimidazole + nicotinate beta-D-ribonucleotide = alpha-ribazole 5'-phosphate + nicotinate + H(+). Its pathway is nucleoside biosynthesis; alpha-ribazole biosynthesis; alpha-ribazole from 5,6-dimethylbenzimidazole: step 1/2. Catalyzes the synthesis of alpha-ribazole-5'-phosphate from nicotinate mononucleotide (NAMN) and 5,6-dimethylbenzimidazole (DMB). In Rhizobium leguminosarum bv. trifolii (strain WSM2304), this protein is Nicotinate-nucleotide--dimethylbenzimidazole phosphoribosyltransferase.